A 339-amino-acid chain; its full sequence is Ketol-acid reductoisomerase (NADP(+)) (339 aa).

The KARI N-terminal Rossmann domain occupies 1-182 (MRVYYDRDAD…GGGRSGVIET (182 aa)). NADP(+)-binding positions include 24–27 (YGSQ), R48, S51, T53, and 83–86 (DELQ). H108 is an active-site residue. NADP(+) is bound at residue G134. The 146-residue stretch at 183–328 (TFKEECETDL…GKLRAMMPWI (146 aa)) folds into the KARI C-terminal knotted domain. 4 residues coordinate Mg(2+): D191, E195, E227, and E231. Position 252 (S252) interacts with substrate.

Belongs to the ketol-acid reductoisomerase family. Mg(2+) serves as cofactor.

It carries out the reaction (2R)-2,3-dihydroxy-3-methylbutanoate + NADP(+) = (2S)-2-acetolactate + NADPH + H(+). It catalyses the reaction (2R,3R)-2,3-dihydroxy-3-methylpentanoate + NADP(+) = (S)-2-ethyl-2-hydroxy-3-oxobutanoate + NADPH + H(+). Its pathway is amino-acid biosynthesis; L-isoleucine biosynthesis; L-isoleucine from 2-oxobutanoate: step 2/4. It participates in amino-acid biosynthesis; L-valine biosynthesis; L-valine from pyruvate: step 2/4. Functionally, involved in the biosynthesis of branched-chain amino acids (BCAA). Catalyzes an alkyl-migration followed by a ketol-acid reduction of (S)-2-acetolactate (S2AL) to yield (R)-2,3-dihydroxy-isovalerate. In the isomerase reaction, S2AL is rearranged via a Mg-dependent methyl migration to produce 3-hydroxy-3-methyl-2-ketobutyrate (HMKB). In the reductase reaction, this 2-ketoacid undergoes a metal-dependent reduction by NADPH to yield (R)-2,3-dihydroxy-isovalerate. The protein is Ketol-acid reductoisomerase (NADP(+)) of Brucella suis (strain ATCC 23445 / NCTC 10510).